The primary structure comprises 213 residues: GTP-binding protein yptV4 (213 aa).

Position 13-21 (13-21) interacts with GTP; it reads GDTGVGKSC. Positions 35–43 match the Effector region motif; it reads HDLTIGVEF. Residues 61–65, 119–122, and 149–151 contribute to the GTP site; these read DTAGQ, NKCD, and SAR. The tract at residues 194 to 213 is disordered; sequence AGPQAAKPGEGDARKSSSCC. Residues 202-213 show a composition bias toward basic and acidic residues; sequence GEGDARKSSSCC. S-geranylgeranyl cysteine attachment occurs at residues Cys-212 and Cys-213.

This sequence belongs to the small GTPase superfamily. Rab family.

The protein localises to the cell membrane. Functionally, protein transport. Probably involved in vesicular traffic. The polypeptide is GTP-binding protein yptV4 (YPTV4) (Volvox carteri (Green alga)).